Reading from the N-terminus, the 230-residue chain is Ureidoacrylate amidohydrolase RutB (230 aa).

The active-site Proton acceptor is the D24. The active site involves K133. The active-site Nucleophile is the C166.

It belongs to the isochorismatase family. RutB subfamily.

The catalysed reaction is (Z)-3-ureidoacrylate + H2O + H(+) = (Z)-3-aminoacrylate + NH4(+) + CO2. It catalyses the reaction (Z)-3-ureidoacrylate + H2O = (Z)-3-aminoacrylate + carbamate + H(+). It carries out the reaction (Z)-2-methylureidoacrylate + H2O + H(+) = (Z)-2-methylaminoacrylate + NH4(+) + CO2. Its function is as follows. Hydrolyzes ureidoacrylate to form aminoacrylate and carbamate. The carbamate hydrolyzes spontaneously, thereby releasing one of the nitrogen atoms of the pyrimidine ring as ammonia and one of its carbon atoms as CO2. The polypeptide is Ureidoacrylate amidohydrolase RutB (Escherichia coli (strain K12 / MC4100 / BW2952)).